The chain runs to 242 residues: Coiled-coil domain-containing protein 107 (242 aa).

The signal sequence occupies residues 1–24 (MEGAGPVLSILGLLLVSAPFGVLG). Residues 27–62 (PSADLGAHPERGSQVSPGTTEPRRQPPPKDQRERAR) form a disordered region. Over residues 47-62 (EPRRQPPPKDQRERAR) the composition is skewed to basic and acidic residues. The chain crosses the membrane as a helical span at residues 65 to 85 (SLSLGALYTAAVVAFVLFKCL). Residues 97–132 (EKNKKKSSQSEQQLVQLTQQLAQTEQHLNHLMTQLD) adopt a coiled-coil conformation. The segment at 186-210 (KEDQEAGNSQAWEEPITWSPETRNL) is disordered.

Its subcellular location is the membrane. The sequence is that of Coiled-coil domain-containing protein 107 (Ccdc107) from Mus musculus (Mouse).